A 796-amino-acid polypeptide reads, in one-letter code: Protein tyrosine phosphatase domain-containing protein 1 (796 aa).

The 172-residue stretch at 126 to 297 (YSSWVTDNIL…LIPLRNIFSC (172 aa)) folds into the Tyrosine-protein phosphatase domain. Catalysis depends on cysteine 234, which acts as the Phosphocysteine intermediate. Phosphoserine is present on residues serine 435 and serine 437.

This sequence belongs to the protein-tyrosine phosphatase family. Non-receptor class PTPDC1 subfamily.

May play roles in cilia formation and/or maintenance. The polypeptide is Protein tyrosine phosphatase domain-containing protein 1 (PTPDC1) (Bos taurus (Bovine)).